The primary structure comprises 313 residues: Ribosomal RNA small subunit methyltransferase H (313 aa).

S-adenosyl-L-methionine contacts are provided by residues 35–37 (GGH), Asp-55, Phe-80, Asp-102, and Gln-109.

This sequence belongs to the methyltransferase superfamily. RsmH family.

Its subcellular location is the cytoplasm. It carries out the reaction cytidine(1402) in 16S rRNA + S-adenosyl-L-methionine = N(4)-methylcytidine(1402) in 16S rRNA + S-adenosyl-L-homocysteine + H(+). Its function is as follows. Specifically methylates the N4 position of cytidine in position 1402 (C1402) of 16S rRNA. This Shewanella baltica (strain OS223) protein is Ribosomal RNA small subunit methyltransferase H.